A 156-amino-acid chain; its full sequence is Small ribosomal subunit protein uS7 (156 aa).

Belongs to the universal ribosomal protein uS7 family. Part of the 30S ribosomal subunit. Contacts proteins S9 and S11.

Its function is as follows. One of the primary rRNA binding proteins, it binds directly to 16S rRNA where it nucleates assembly of the head domain of the 30S subunit. Is located at the subunit interface close to the decoding center, probably blocks exit of the E-site tRNA. This Clavibacter michiganensis subsp. michiganensis (strain NCPPB 382) protein is Small ribosomal subunit protein uS7.